Here is a 115-residue protein sequence, read N- to C-terminus: MSYAIIETGGKQVRVEPGRFYDIERLDVDVDGNHTIEKVLLISDDNGVTVGQPYIDGATVEGTVVDQRRAKKVLVYKMLPKKKTRKKRGHRQYFTRFMIDSIKVGGNVVAAKADA.

Belongs to the bacterial ribosomal protein bL21 family. In terms of assembly, part of the 50S ribosomal subunit. Contacts protein L20.

In terms of biological role, this protein binds to 23S rRNA in the presence of protein L20. The sequence is that of Large ribosomal subunit protein bL21 from Picosynechococcus sp. (strain ATCC 27264 / PCC 7002 / PR-6) (Agmenellum quadruplicatum).